The following is a 388-amino-acid chain: MAKIIVVSTDCPYPANHGGRLDILMRLELLSSTGHDVDLIVTYKEEIDEASKQYLERICKNVYYAQRLGMIRSAFNDMLKFLPLQVKSRSRLREIKLNKKYDYVLCESEYVYSILKNSTLDAKNKLLRVHNDEVVYYKALFNDENSIFKKIYYFYEMLAFKYNKKDINSSFDKLLFISKDECDKESKGIWLPSHIPVMHPFKYDKFDLHNCNVLFVGNLFMPNNLQGLIWYLNKVHPMVIKENPDIKLTIAGNAKNGISEELKKAISIYDGNAINLITSPSDEELQAIYDGNCIFINPMLNGAGVKLKNLDAMRNTMFVVSTSIGSEGTGTNHGEQLVIANDEVLFAKHIINYSKNISGMKEIAFNAFSFIQENYDSKKVFSSIFKEN.

This is an uncharacterized protein from Klebsiella pneumoniae.